The primary structure comprises 509 residues: ATP synthase subunit alpha (509 aa).

Position 169 to 176 (169 to 176 (GDRQTGKT)) interacts with ATP.

Belongs to the ATPase alpha/beta chains family. F-type ATPases have 2 components, CF(1) - the catalytic core - and CF(0) - the membrane proton channel. CF(1) has five subunits: alpha(3), beta(3), gamma(1), delta(1), epsilon(1). CF(0) has three main subunits: a(1), b(2) and c(9-12). The alpha and beta chains form an alternating ring which encloses part of the gamma chain. CF(1) is attached to CF(0) by a central stalk formed by the gamma and epsilon chains, while a peripheral stalk is formed by the delta and b chains.

Its subcellular location is the cell inner membrane. The enzyme catalyses ATP + H2O + 4 H(+)(in) = ADP + phosphate + 5 H(+)(out). In terms of biological role, produces ATP from ADP in the presence of a proton gradient across the membrane. The alpha chain is a regulatory subunit. This is ATP synthase subunit alpha from Mesorhizobium japonicum (strain LMG 29417 / CECT 9101 / MAFF 303099) (Mesorhizobium loti (strain MAFF 303099)).